The chain runs to 1031 residues: Putative glycine dehydrogenase (decarboxylating), mitochondrial (1031 aa).

A mitochondrion-targeting transit peptide spans 1-49 (MFDSFMKRNQLALIMFRACSKLQYHGVNTSLSRHLFLAKRNLSISSACL). At Lys783 the chain carries N6-(pyridoxal phosphate)lysine.

This sequence belongs to the GcvP family. It depends on pyridoxal 5'-phosphate as a cofactor.

The protein localises to the mitochondrion. The enzyme catalyses N(6)-[(R)-lipoyl]-L-lysyl-[glycine-cleavage complex H protein] + glycine + H(+) = N(6)-[(R)-S(8)-aminomethyldihydrolipoyl]-L-lysyl-[glycine-cleavage complex H protein] + CO2. In terms of biological role, the glycine cleavage system catalyzes the degradation of glycine. The P protein binds the alpha-amino group of glycine through its pyridoxal phosphate cofactor; CO(2) is released and the remaining methylamine moiety is then transferred to the lipoamide cofactor of the H protein. In Schizosaccharomyces pombe (strain 972 / ATCC 24843) (Fission yeast), this protein is Putative glycine dehydrogenase (decarboxylating), mitochondrial (gcv2).